The sequence spans 662 residues: p-hydroxybenzoic acid efflux pump subunit AaeB (662 aa).

Helical transmembrane passes span 22–42 (FAFK…HLQL), 52–72 (AAIV…SGAI), 76–96 (GMLR…IIIA), 102–122 (VVML…SSLV), 129–149 (IFGL…GTPL), 161–181 (EIVL…PRSI), 378–398 (LFWL…IAVV), 415–435 (FLFG…FIMP), 439–459 (QSML…GLEV), 465–485 (GSLG…PMTF), and 491–511 (LDSA…IMLI).

It belongs to the aromatic acid exporter ArAE (TC 2.A.85) family.

Its subcellular location is the cell inner membrane. Its function is as follows. Forms an efflux pump with AaeA. Could function as a metabolic relief valve, allowing to eliminate certain compounds when they accumulate to high levels in the cell. The polypeptide is p-hydroxybenzoic acid efflux pump subunit AaeB (Pectobacterium atrosepticum (strain SCRI 1043 / ATCC BAA-672) (Erwinia carotovora subsp. atroseptica)).